Consider the following 257-residue polypeptide: NAD-capped RNA hydrolase NudC (257 aa).

Substrate is bound at residue Arg-69. Zn(2+) is bound by residues Cys-98 and Cys-101. Residue Glu-111 coordinates substrate. Cys-116 and Cys-119 together coordinate Zn(2+). Substrate is bound at residue Tyr-124. The Nudix hydrolase domain occupies 125 to 248; it reads PQIAPCIIVA…TVARRLIEDT (124 aa). A divalent metal cation-binding residues include Ala-158, Glu-174, and Glu-178. The Nudix box signature appears at 159–180; that stretch reads GFVEVGETLEQAVAREVMEESG. 192–199 serves as a coordination point for substrate; that stretch reads QPWPFPQS. Glu-219 provides a ligand contact to a divalent metal cation. Position 241 (Ala-241) interacts with substrate.

Belongs to the Nudix hydrolase family. NudC subfamily. As to quaternary structure, homodimer. The cofactor is Mg(2+). Mn(2+) serves as cofactor. It depends on Zn(2+) as a cofactor.

The enzyme catalyses a 5'-end NAD(+)-phospho-ribonucleoside in mRNA + H2O = a 5'-end phospho-adenosine-phospho-ribonucleoside in mRNA + beta-nicotinamide D-ribonucleotide + 2 H(+). It carries out the reaction NAD(+) + H2O = beta-nicotinamide D-ribonucleotide + AMP + 2 H(+). It catalyses the reaction NADH + H2O = reduced beta-nicotinamide D-ribonucleotide + AMP + 2 H(+). Functionally, mRNA decapping enzyme that specifically removes the nicotinamide adenine dinucleotide (NAD) cap from a subset of mRNAs by hydrolyzing the diphosphate linkage to produce nicotinamide mononucleotide (NMN) and 5' monophosphate mRNA. The NAD-cap is present at the 5'-end of some mRNAs and stabilizes RNA against 5'-processing. Has preference for mRNAs with a 5'-end purine. Catalyzes the hydrolysis of a broad range of dinucleotide pyrophosphates. The chain is NAD-capped RNA hydrolase NudC from Klebsiella pneumoniae subsp. pneumoniae (strain ATCC 700721 / MGH 78578).